A 363-amino-acid chain; its full sequence is MTDKSYKIAVLPGDGIGPEVMAQAHKVLDAIEQKHGISFEREEHDVGGIAIDNHGCPLPESTVTACEESDAVLFGSVGGPKWEHLPPNDQPERGALLPLRKHFQLFCNLRPAQIHAGLEAFSPLRADISGRGFDIVVVRELTGGIYFGQPKGREGEGANEKAFDTEVYHRYEIERIAKIAFESARLRRKKVCSIDKANVLQSSILWREVVEEIAKDYPDVELSHMYIDNATMQLIKDPAQFDVMLCSNIFGDIISDECAMITGSMGMLPSASLNESKFGLYEPAGGSAPDIAGKNIANPVAQILSAALMLRYSLGEEAAAQDIESAVSKALSAGELTADLASDKPALTTSEMGDKIAEYILNS.

79 to 92 (GPKWEHLPPNDQPE) serves as a coordination point for NAD(+). Substrate-binding residues include Arg-100, Arg-110, Arg-139, and Asp-228. Mg(2+) is bound by residues Asp-228, Asp-252, and Asp-256. Position 286-298 (286-298 (GSAPDIAGKNIAN)) interacts with NAD(+).

The protein belongs to the isocitrate and isopropylmalate dehydrogenases family. LeuB type 1 subfamily. Homodimer. Mg(2+) serves as cofactor. Mn(2+) is required as a cofactor.

The protein localises to the cytoplasm. The enzyme catalyses (2R,3S)-3-isopropylmalate + NAD(+) = 4-methyl-2-oxopentanoate + CO2 + NADH. It participates in amino-acid biosynthesis; L-leucine biosynthesis; L-leucine from 3-methyl-2-oxobutanoate: step 3/4. Its function is as follows. Catalyzes the oxidation of 3-carboxy-2-hydroxy-4-methylpentanoate (3-isopropylmalate) to 3-carboxy-4-methyl-2-oxopentanoate. The product decarboxylates to 4-methyl-2 oxopentanoate. The polypeptide is 3-isopropylmalate dehydrogenase (Vibrio parahaemolyticus serotype O3:K6 (strain RIMD 2210633)).